The sequence spans 467 residues: UDP-N-acetylmuramate--L-alanine ligase (467 aa).

An ATP-binding site is contributed by 114–120 (GTHGKTT).

Belongs to the MurCDEF family.

The protein localises to the cytoplasm. It carries out the reaction UDP-N-acetyl-alpha-D-muramate + L-alanine + ATP = UDP-N-acetyl-alpha-D-muramoyl-L-alanine + ADP + phosphate + H(+). It participates in cell wall biogenesis; peptidoglycan biosynthesis. Cell wall formation. The protein is UDP-N-acetylmuramate--L-alanine ligase of Chlorobium chlorochromatii (strain CaD3).